The primary structure comprises 477 residues: Lactate utilization protein B (477 aa).

2 4Fe-4S ferredoxin-type domains span residues G304–Y334 and Y353–L382. Residues C313, C316, C319, C323, C366, C369, and C373 each coordinate [4Fe-4S] cluster. Residues G443–N463 are disordered.

Belongs to the LutB/YkgF family.

Its function is as follows. Is involved in L-lactate degradation and allows cells to grow with lactate as the sole carbon source. Has probably a role as an electron transporter during oxidation of L-lactate. This chain is Lactate utilization protein B, found in Macrococcus caseolyticus (strain JCSC5402) (Macrococcoides caseolyticum).